A 199-amino-acid polypeptide reads, in one-letter code: Glycerol-3-phosphate acyltransferase (199 aa).

The next 5 membrane-spanning stretches (helical) occupy residues 4–24 (LVSV…FLMG), 51–71 (WAAL…AYLG), 77–97 (EWGF…PVWL), 111–131 (VMLL…ALAV), and 152–172 (LFLL…AVVI).

The protein belongs to the PlsY family. As to quaternary structure, probably interacts with PlsX.

It localises to the cell membrane. The enzyme catalyses an acyl phosphate + sn-glycerol 3-phosphate = a 1-acyl-sn-glycero-3-phosphate + phosphate. It participates in lipid metabolism; phospholipid metabolism. Functionally, catalyzes the transfer of an acyl group from acyl-phosphate (acyl-PO(4)) to glycerol-3-phosphate (G3P) to form lysophosphatidic acid (LPA). This enzyme utilizes acyl-phosphate as fatty acyl donor, but not acyl-CoA or acyl-ACP. The chain is Glycerol-3-phosphate acyltransferase from Symbiobacterium thermophilum (strain DSM 24528 / JCM 14929 / IAM 14863 / T).